A 427-amino-acid chain; its full sequence is Cholecystokinin receptor type A (427 aa).

Topologically, residues 1–41 are extracellular; sequence MDAVASLLGNASGIPPPCELGLDNETLFCLDQPPPSKEWQP. Residues N10 and N24 are each glycosylated (N-linked (GlcNAc...) asparagine). C18 and C29 are joined by a disulfide. The chain crosses the membrane as a helical span at residues 42–67; the sequence is AVQILLYSLIFLLSVLGNTLVITVLI. The Cytoplasmic segment spans residues 68–77; sequence RNKRMRTVTN. The helical transmembrane segment at 78-104 threads the bilayer; the sequence is IFLLSLAISDLMLCLFCMPFNLIPNLL. The Extracellular segment spans residues 105 to 115; it reads KDFIFGSALCK. Residues C114 and C196 are joined by a disulfide bond. The chain crosses the membrane as a helical span at residues 116–137; that stretch reads TTTYLMGTSVSVSTLNLVAISL. At 138–157 the chain is on the cytoplasmic side; that stretch reads ERYGAICKPLQSRVWQTKSH. The helical transmembrane segment at 158-178 threads the bilayer; that stretch reads ALKVIAATWCLSFAIMTPYPI. The Extracellular segment spans residues 179–210; sequence YSNLVPFTKTNNQTANMCRFLLPSDVMQQAWH. N190 carries N-linked (GlcNAc...) asparagine glycosylation. A helical transmembrane segment spans residues 211–234; sequence TFLLLILFLIPGIVMMVAYGMISL. The Cytoplasmic portion of the chain corresponds to 235–312; it reads ELYQGIKFDA…TLMAKKRVIR (78 aa). The helical transmembrane segment at 313 to 333 threads the bilayer; the sequence is MLMVIVVLFFLCWMPIFSANA. Over 334–348 the chain is Extracellular; sequence WRAYDTVSAERRLSG. The chain crosses the membrane as a helical span at residues 349 to 372; that stretch reads TPISFILLLSYTSSCVNPIIYCFM. The Cytoplasmic portion of the chain corresponds to 373 to 427; sequence NRRFRLGFMATFPCCPNPGPPGPRAEAGEEEEGRTTRASLSRYSYSHMSASAPPS. C386 is lipidated: S-palmitoyl cysteine. Residues 391 to 427 are disordered; the sequence is GPPGPRAEAGEEEEGRTTRASLSRYSYSHMSASAPPS. Positions 411 to 421 are enriched in polar residues; sequence SLSRYSYSHMS.

It belongs to the G-protein coupled receptor 1 family.

Its subcellular location is the cell membrane. Receptor for cholecystokinin. Mediates pancreatic growth and enzyme secretion, smooth muscle contraction of the gall bladder and stomach. Has a 1000-fold higher affinity for CCK rather than for gastrin. It modulates feeding and dopamine-induced behavior in the central and peripheral nervous system. This receptor mediates its action by association with G proteins that activate a phosphatidylinositol-calcium second messenger system. In Oryctolagus cuniculus (Rabbit), this protein is Cholecystokinin receptor type A (CCKAR).